The sequence spans 219 residues: Probable GTP-binding protein EngB (219 aa).

An EngB-type G domain is found at Leu40–Lys212. GTP contacts are provided by residues Gly48–Ser55, Gly75–Gln79, Asp93–Gly96, Thr160–Asp163, and Val191–Ser193. Mg(2+) contacts are provided by Ser55 and Thr77.

The protein belongs to the TRAFAC class TrmE-Era-EngA-EngB-Septin-like GTPase superfamily. EngB GTPase family. Requires Mg(2+) as cofactor.

In terms of biological role, necessary for normal cell division and for the maintenance of normal septation. The chain is Probable GTP-binding protein EngB from Rickettsia canadensis (strain McKiel).